We begin with the raw amino-acid sequence, 729 residues long: Catalase-peroxidase (729 aa).

The tryptophyl-tyrosyl-methioninium (Trp-Tyr) (with M-244) cross-link spans Trp95–Tyr218. His96 functions as the Proton acceptor in the catalytic mechanism. Residues Tyr218–Met244 constitute a cross-link (tryptophyl-tyrosyl-methioninium (Tyr-Met) (with W-95)). Residue His259 coordinates heme b.

Belongs to the peroxidase family. Peroxidase/catalase subfamily. As to quaternary structure, homodimer or homotetramer. It depends on heme b as a cofactor. Post-translationally, formation of the three residue Trp-Tyr-Met cross-link is important for the catalase, but not the peroxidase activity of the enzyme.

It catalyses the reaction H2O2 + AH2 = A + 2 H2O. It carries out the reaction 2 H2O2 = O2 + 2 H2O. Its function is as follows. Bifunctional enzyme with both catalase and broad-spectrum peroxidase activity. The polypeptide is Catalase-peroxidase (Synechococcus sp. (strain CC9605)).